We begin with the raw amino-acid sequence, 413 residues long: Tyrosine--tRNA ligase (413 aa).

Y34 is a binding site for L-tyrosine. The 'HIGH' region signature appears at 39 to 48 (PTSHSLTVGH). Residues Y164 and Q168 each coordinate L-tyrosine. The 'KMSKS' region motif lies at 225–229 (KFGKS). K228 is a binding site for ATP. An S4 RNA-binding domain is found at 347–413 (ILLVDALVQT…GKKNNALIVF (67 aa)).

This sequence belongs to the class-I aminoacyl-tRNA synthetase family. TyrS type 1 subfamily. Homodimer.

It is found in the cytoplasm. It catalyses the reaction tRNA(Tyr) + L-tyrosine + ATP = L-tyrosyl-tRNA(Tyr) + AMP + diphosphate + H(+). Catalyzes the attachment of tyrosine to tRNA(Tyr) in a two-step reaction: tyrosine is first activated by ATP to form Tyr-AMP and then transferred to the acceptor end of tRNA(Tyr). The polypeptide is Tyrosine--tRNA ligase (Aster yellows witches'-broom phytoplasma (strain AYWB)).